We begin with the raw amino-acid sequence, 362 residues long: Alanine racemase (362 aa).

The active-site Proton acceptor; specific for D-alanine is Lys-33. At Lys-33 the chain carries N6-(pyridoxal phosphate)lysine. Arg-129 is a binding site for substrate. Residue Tyr-254 is the Proton acceptor; specific for L-alanine of the active site. Met-302 contributes to the substrate binding site.

The protein belongs to the alanine racemase family. It depends on pyridoxal 5'-phosphate as a cofactor.

It carries out the reaction L-alanine = D-alanine. It functions in the pathway amino-acid biosynthesis; D-alanine biosynthesis; D-alanine from L-alanine: step 1/1. Its function is as follows. Catalyzes the interconversion of L-alanine and D-alanine. May also act on other amino acids. The chain is Alanine racemase (alr) from Xylella fastidiosa (strain 9a5c).